The sequence spans 338 residues: Glyceraldehyde-3-phosphate dehydrogenase 2 (338 aa).

Residues 13–14 (TI) and G111 contribute to the NAD(+) site. 140–142 (SCN) lines the D-glyceraldehyde 3-phosphate pocket. The Nucleophile role is filled by C141. NAD(+) is bound at residue R169. 195-196 (HG) lines the D-glyceraldehyde 3-phosphate pocket. Residue Q300 coordinates NAD(+).

This sequence belongs to the glyceraldehyde-3-phosphate dehydrogenase family. Homotetramer.

The protein resides in the cytoplasm. It catalyses the reaction D-glyceraldehyde 3-phosphate + phosphate + NADP(+) = (2R)-3-phospho-glyceroyl phosphate + NADPH + H(+). The catalysed reaction is D-glyceraldehyde 3-phosphate + phosphate + NAD(+) = (2R)-3-phospho-glyceroyl phosphate + NADH + H(+). The protein operates within carbohydrate degradation; glycolysis; pyruvate from D-glyceraldehyde 3-phosphate: step 1/5. In Methanosarcina barkeri (strain Fusaro / DSM 804), this protein is Glyceraldehyde-3-phosphate dehydrogenase 2.